A 174-amino-acid chain; its full sequence is Adenine phosphoribosyltransferase (174 aa).

Belongs to the purine/pyrimidine phosphoribosyltransferase family. Homodimer.

It is found in the cytoplasm. It catalyses the reaction AMP + diphosphate = 5-phospho-alpha-D-ribose 1-diphosphate + adenine. It functions in the pathway purine metabolism; AMP biosynthesis via salvage pathway; AMP from adenine: step 1/1. Functionally, catalyzes a salvage reaction resulting in the formation of AMP, that is energically less costly than de novo synthesis. The chain is Adenine phosphoribosyltransferase from Lachnoclostridium phytofermentans (strain ATCC 700394 / DSM 18823 / ISDg) (Clostridium phytofermentans).